The following is a 346-amino-acid chain: Outer membrane protein A (346 aa).

The N-terminal stretch at 1-21 is a signal peptide; that stretch reads MKKTAIAIAVALAGFATVAQA. A run of 8 beta stranded transmembrane segments spans residues 27–37, 55–66, 70–78, 96–107, 112–120, 142–151, 156–163, and 182–190; these read TWYTGAKLGWS, QLGAGAFGGYQV, VGFEMGYDW, QGVQLTAKLGYP, LDIYTRLGG, PVFAGGVEYA, IATRLEYQ, and MLSLGVSYR. The segment at 197–208 is hinge-like; that stretch reads APVVAPAPAPAP. 4 repeat units span residues 201–202, 203–204, 205–206, and 207–208. Positions 201-208 are 4 X 2 AA tandem repeats of A-P; it reads APAPAPAP. An OmpA-like domain is found at 210 to 338; it reads VQTKHFTLKS…RVEIEVKGIK (129 aa). Residues cysteine 311 and cysteine 323 are joined by a disulfide bond.

This sequence belongs to the outer membrane OOP (TC 1.B.6) superfamily. OmpA family. In terms of assembly, monomer and homodimer.

The protein resides in the cell outer membrane. Its function is as follows. With TolR probably plays a role in maintaining the position of the peptidoglycan cell wall in the periplasm. Acts as a porin with low permeability that allows slow penetration of small solutes; an internal gate slows down solute passage. Functionally, required for conjugation with F-type plasmids; probably serves as the mating receptor on recipient cells. The sequence is that of Outer membrane protein A from Escherichia coli O157:H7.